We begin with the raw amino-acid sequence, 90 residues long: DNA-directed RNA polymerase subunit omega (90 aa).

Belongs to the RNA polymerase subunit omega family. In terms of assembly, the RNAP catalytic core consists of 2 alpha, 1 beta, 1 beta' and 1 omega subunit. When a sigma factor is associated with the core the holoenzyme is formed, which can initiate transcription.

It carries out the reaction RNA(n) + a ribonucleoside 5'-triphosphate = RNA(n+1) + diphosphate. Its function is as follows. Promotes RNA polymerase assembly. Latches the N- and C-terminal regions of the beta' subunit thereby facilitating its interaction with the beta and alpha subunits. In Saccharophagus degradans (strain 2-40 / ATCC 43961 / DSM 17024), this protein is DNA-directed RNA polymerase subunit omega.